A 546-amino-acid chain; its full sequence is CTP synthase (546 aa).

The amidoligase domain stretch occupies residues 1-266 (MTKYIFVTGG…GDYLVERLGL (266 aa)). Residue serine 13 coordinates CTP. Serine 13 provides a ligand contact to UTP. Residue 14 to 19 (SVGKGI) participates in ATP binding. L-glutamine is bound at residue tyrosine 54. Aspartate 71 contacts ATP. Aspartate 71 and glutamate 141 together coordinate Mg(2+). Residues 148 to 150 (DIE), 187 to 192 (KTKPTQ), and lysine 223 contribute to the CTP site. UTP-binding positions include 187 to 192 (KTKPTQ) and lysine 223. Residues 291 to 533 (PIALVGKYVE…VAAAAQTLLA (243 aa)) form the Glutamine amidotransferase type-1 domain. Glycine 353 serves as a coordination point for L-glutamine. The Nucleophile; for glutamine hydrolysis role is filled by cysteine 380. L-glutamine contacts are provided by residues 381-384 (LGMQ), glutamate 404, and arginine 461. Catalysis depends on residues histidine 506 and glutamate 508.

It belongs to the CTP synthase family. Homotetramer.

The catalysed reaction is UTP + L-glutamine + ATP + H2O = CTP + L-glutamate + ADP + phosphate + 2 H(+). It carries out the reaction L-glutamine + H2O = L-glutamate + NH4(+). It catalyses the reaction UTP + NH4(+) + ATP = CTP + ADP + phosphate + 2 H(+). It functions in the pathway pyrimidine metabolism; CTP biosynthesis via de novo pathway; CTP from UDP: step 2/2. With respect to regulation, allosterically activated by GTP, when glutamine is the substrate; GTP has no effect on the reaction when ammonia is the substrate. The allosteric effector GTP functions by stabilizing the protein conformation that binds the tetrahedral intermediate(s) formed during glutamine hydrolysis. Inhibited by the product CTP, via allosteric rather than competitive inhibition. Functionally, catalyzes the ATP-dependent amination of UTP to CTP with either L-glutamine or ammonia as the source of nitrogen. Regulates intracellular CTP levels through interactions with the four ribonucleotide triphosphates. The sequence is that of CTP synthase from Chloroflexus aurantiacus (strain ATCC 29366 / DSM 635 / J-10-fl).